Reading from the N-terminus, the 163-residue chain is Transcriptional repressor NrdR (163 aa).

A zinc finger spans residues 3 to 34 (CPFCAHPEDKVVDSRESKEGESIRRRRECLKC). Residues 49–139 (YMVVKKDGRR…VYLDFKDVRE (91 aa)) form the ATP-cone domain.

The protein belongs to the NrdR family. It depends on Zn(2+) as a cofactor.

Negatively regulates transcription of bacterial ribonucleotide reductase nrd genes and operons by binding to NrdR-boxes. The sequence is that of Transcriptional repressor NrdR from Koribacter versatilis (strain Ellin345).